The sequence spans 355 residues: Elongation factor Ts (355 aa).

Residues 82–85 are involved in Mg(2+) ion dislocation from EF-Tu; that stretch reads TDFV.

Belongs to the EF-Ts family.

The protein localises to the cytoplasm. In terms of biological role, associates with the EF-Tu.GDP complex and induces the exchange of GDP to GTP. It remains bound to the aminoacyl-tRNA.EF-Tu.GTP complex up to the GTP hydrolysis stage on the ribosome. The protein is Elongation factor Ts of Helicobacter pylori (strain P12).